The following is a 58-amino-acid chain: uncharacterized protein (58 aa).

The protein resides in the plastid. It is found in the chloroplast. This is an uncharacterized protein from Chlamydomonas reinhardtii (Chlamydomonas smithii).